The sequence spans 151 residues: MKYQQLENLESGWKWKYLVKKHREGELITCYIEASAAKEAVDLLLTLENEPVHVNSWIEKHINPALLNRMKQTIRARRKRHFNAEHQHTRKKSIDLEFMVWQRLAGLAQRRGKTLSETVVQLIEDAEHKEKYANQMSTLKNDLQAMLGKKE.

The protein belongs to the MatP family. As to quaternary structure, homodimer.

The protein resides in the cytoplasm. Functionally, required for spatial organization of the terminus region of the chromosome (Ter macrodomain) during the cell cycle. Prevents early segregation of duplicated Ter macrodomains during cell division. Binds specifically to matS, which is a 13 bp signature motif repeated within the Ter macrodomain. The sequence is that of Macrodomain Ter protein from Enterobacter sp. (strain 638).